The primary structure comprises 196 residues: MSRYRGPRLKKIRRLGALPGLTRKTPKSGSNLKKKFHSGKKEQYRIRLQEKQKLRFHYGLTERQLLRYVHIAGKAKRSTGQVLLQLLEMRLDNILFRLGMASTIPGARQLVNHRHILVNGRIVNIPSFRCKPRDIITTKDNQRSKGLVQNFIASSDPGKLPKHLTIDTLEYKGLVNKILDRKWVGLKINELLVVEY.

The tract at residues 16 to 36 (GALPGLTRKTPKSGSNLKKKF) is disordered. Positions 89-169 (MRLDNILFRL…LPKHLTIDTL (81 aa)) constitute an S4 RNA-binding domain.

It belongs to the universal ribosomal protein uS4 family. In terms of assembly, part of the 30S ribosomal subunit. Contacts protein S5. The interaction surface between S4 and S5 is involved in control of translational fidelity.

It is found in the plastid. The protein localises to the chloroplast. One of the primary rRNA binding proteins, it binds directly to 16S rRNA where it nucleates assembly of the body of the 30S subunit. Functionally, with S5 and S12 plays an important role in translational accuracy. The polypeptide is Small ribosomal subunit protein uS4c (rps4) (Cinna latifolia (Drooping woodreed)).